Consider the following 446-residue polypeptide: Putative hydrolase YbfO (446 aa).

An N-terminal signal peptide occupies residues 1–28 (MKRMIVRMTLPLLIVCLAFSSFSASARA).

The chain is Putative hydrolase YbfO (ybfO) from Bacillus subtilis (strain 168).